The following is a 764-amino-acid chain: Kinesin-like protein KIN-14N (764 aa).

The segment at 1 to 50 (MSTRATRPGMLHQKENAADAQAGKRQRTAAGSAARAPLSANAAPPAPDPA) is disordered. The span at 29-50 (AAGSAARAPLSANAAPPAPDPA) shows a compositional bias: low complexity. Residues 105-416 (AEIGKLNGLL…RLHNTILELK (312 aa)) are a coiled coil. Residues 418–747 (NIRVFCRVRP…LRFAARVNSC (330 aa)) enclose the Kinesin motor domain. ATP is bound at residue 498–505 (GQTGSGKT).

The protein belongs to the TRAFAC class myosin-kinesin ATPase superfamily. Kinesin family. KIN-14 subfamily.

This chain is Kinesin-like protein KIN-14N, found in Oryza sativa subsp. japonica (Rice).